The following is a 474-amino-acid chain: MINFSLLTSIVLLASKVVGVSPSYNGLGLTPQMGWNNWNTFACNVSEDLLLSTVDRIAALGLRDIGYHYVILDDCWSDGRDSDGMLVPDSTKFPNGMKHVADYLHGKDFLFGMYSSAGEYTCAGYAGSLDHEEDDAAFFAKNEVDYLKYDNCYNRGQFGTPETSFNRYRAMSEALNKTERPIFYSLCNWGQDLTFYWGSGIANSWRISGDITAEFDRPDSRCPCDGDEYDCPYAGFHCSIMNILNKAAPMGQNAGVGGWNDLDCLEVGVGNLTDDEEKAHFSMWAIVKSAMVIGADVRNLKPSSFSIYSQASVLAINQDPAGAPAIRVWRRYVPETDQHGQGEVQLWSGPLDNGDRVVALLNGGAKERPMVAYLEDIFIDSFVGSEELSSTWNVYDLWANRIDDSTASQILVGNRTANGLLYNATQLSYADGLKANDTRLFGEKVGTIEPYGLLNVTVPAHGVGLFRLRRESRK.

Residues 1–22 form the signal peptide; the sequence is MINFSLLTSIVLLASKVVGVSP. Disulfide bonds link Cys-43–Cys-75 and Cys-122–Cys-152. A glycan (N-linked (GlcNAc...) asparagine) is linked at Asn-44. Substrate-binding residues include Asp-73, Asp-74, and Lys-148. The active-site Nucleophile is Asp-150. N-linked (GlcNAc...) asparagine glycosylation is present at Asn-176. Arg-206 serves as a coordination point for substrate. The Proton donor role is filled by Asp-210. 2 cysteine pairs are disulfide-bonded: Cys-222/Cys-238 and Cys-224/Cys-231. Gln-252 is a binding site for substrate. N-linked (GlcNAc...) asparagine glycosylation is found at Asn-271, Asn-414, Asn-423, Asn-436, and Asn-455.

The protein belongs to the glycosyl hydrolase 27 family. In terms of assembly, homotetramer.

Its subcellular location is the secreted. The catalysed reaction is Hydrolysis of terminal, non-reducing alpha-D-galactose residues in alpha-D-galactosides, including galactose oligosaccharides, galactomannans and galactolipids.. The protein is Alpha-galactosidase (MEL) of Torulaspora delbrueckii (Yeast).